Reading from the N-terminus, the 418-residue chain is Putative competence-damage inducible protein (418 aa).

The protein belongs to the CinA family.

The sequence is that of Putative competence-damage inducible protein from Streptococcus pneumoniae (strain CGSP14).